The primary structure comprises 532 residues: Invertase 1 (532 aa).

The first 19 residues, 1–19 (MLLQAFLFLLAGFAAKISA), serve as a signal peptide directing secretion. N-linked (GlcNAc...) asparagine glycosylation occurs at asparagine 23. Substrate contacts are provided by residues 39–42 (WMND) and glutamine 60. Aspartate 42 is an active-site residue. N-linked (GlcNAc...) asparagine glycosylation occurs at asparagine 64. Substrate is bound at residue 102-103 (YS). Asparagine 111, asparagine 112, asparagine 118, and asparagine 165 each carry an N-linked (GlcNAc...) asparagine glycan. Residues 170-171 (RD) and glutamate 223 contribute to the substrate site. Asparagine 275 carries N-linked (GlcNAc...) asparagine glycosylation. Tryptophan 311 contacts substrate. 5 N-linked (GlcNAc...) asparagine glycosylation sites follow: asparagine 356, asparagine 369, asparagine 384, asparagine 398, and asparagine 512.

Belongs to the glycosyl hydrolase 32 family. Post-translationally, isoform Secreted is glycosylated. Isoform Intracellular is not glycosylated.

It localises to the cytoplasm. The protein resides in the secreted. It catalyses the reaction Hydrolysis of terminal non-reducing beta-D-fructofuranoside residues in beta-D-fructofuranosides.. The protein is Invertase 1 (SUC1) of Saccharomyces cerevisiae (Baker's yeast).